Here is a 125-residue protein sequence, read N- to C-terminus: Large ribosomal subunit protein bL12 (125 aa).

The protein belongs to the bacterial ribosomal protein bL12 family. In terms of assembly, homodimer. Part of the ribosomal stalk of the 50S ribosomal subunit. Forms a multimeric L10(L12)X complex, where L10 forms an elongated spine to which 2 to 4 L12 dimers bind in a sequential fashion. Binds GTP-bound translation factors.

Forms part of the ribosomal stalk which helps the ribosome interact with GTP-bound translation factors. Is thus essential for accurate translation. The chain is Large ribosomal subunit protein bL12 from Chelativorans sp. (strain BNC1).